A 734-amino-acid chain; its full sequence is Fc receptor-like protein 3 (734 aa).

An N-terminal signal peptide occupies residues 1 to 17 (MLLWLLLLILTPGREQS). Over 18–573 (GVAPKAVLLL…GTSRNRTGLT (556 aa)) the chain is Extracellular. Ig-like C2-type domains follow at residues 21–98 (PKAV…VEFS), 99–182 (PDWL…KPLN), 192–270 (PVLR…HSIK), 284–369 (PVSN…PILS), 383–470 (PVLT…LRVT), and 476–563 (PVLT…LNVT). Cystine bridges form between Cys-44–Cys-82, Cys-120–Cys-163, Cys-211–Cys-260, Cys-309–Cys-358, Cys-404–Cys-451, and Cys-497–Cys-544. A glycan (N-linked (GlcNAc...) asparagine) is linked at Asn-561. Residues 574–594 (AAGITGLVLSILVLAAAAALL) traverse the membrane as a helical segment. Residues 595-734 (HYARARRKPG…VPRVLLASDH (140 aa)) lie on the Cytoplasmic side of the membrane. A disordered region spans residues 603–655 (PGGLSATGTSSHSPSECQEPSSSRPSRIDPQEPTHSKPLAPMELEPMYSNVNP). The span at 608-627 (ATGTSSHSPSECQEPSSSRP) shows a compositional bias: polar residues. The segment covering 628 to 637 (SRIDPQEPTH) has biased composition (basic and acidic residues). Short sequence motifs (ITIM motif) lie at residues 648 to 653 (PMYSNV), 660 to 665 (PIYSQI), 690 to 695 (VLYSEL), and 720 to 725 (ENYENV). A phosphotyrosine mark is found at Tyr-650, Tyr-662, Tyr-692, and Tyr-722. Residues 695 to 734 (LKKTHPDDSAGEASSRGRAHEEDDEENYENVPRVLLASDH) are disordered.

In terms of assembly, interacts (via phosphorylated ITIM motifs) with phosphatases INPP5D, PTPN6 and PTPN11. Interacts (via ITIM motifs) SYK and ZAP70. Interacts with IZUMO1R/JUNO. Interacts (via extracellular domain) with IZUMO1; the interaction replaces IZUMO1R/JUNO as IZUMO1 receptor after adhesion between sperm and egg. Phosphorylated on cytoplasmic tyrosines; required for interaction with protein tyrosine phosphatases and protein tyrosine kinases. As to expression, primarily expressed in secondary lymphoid tissues by mature subsets of B-cells. Low expression on transitional B cells which increases to higher surface expression on mature and memory B-cells with innate-like features (at protein level). Expressed a low levels in naive and germinal center B-cells but also expressed in NK cells (at protein level). Expressed in unfertilized oocytes (at protein level). Expressed in a population of thymically derived naturally occurring regulatory T-cells that exhibits a memory phenotype, specialized in suppressing immune response to self-antigens. Detected in spleen, lymph node, peripheral blood lymphocytes, thymus, bone marrow, kidney, salivary gland, adrenal gland and uterus.

The protein localises to the cell membrane. The protein resides in the cell projection. It is found in the microvillus membrane. Functionally, promotes TLR9-induced B-cell proliferation, activation and survival but inhibits antibody production and suppresses plasma cell differentiation. Enhances activation of NF-kappa-B and MAPK signaling pathways in TLR9 stimulated B-cells. Has inhibitory potentional on B-cell receptor (BCR)-mediated signaling, possibly through association with SH2 domain-containing phosphatases. Inhibits cell tyrosine phosphorylation, calcium mobilization and activation-induced cell death induced through BCR signaling. Regulatory T-cells expressing FCRL3 exhibit a memory phenotype, are relatively nonresponsive to antigenic stimulation in presence of IL2 and have reduced capacity to suppress the proliferation of effector T-cells. Acts as a human-specific epitope on the cell surface of oocytes (oolemma) and plays a role during sperm-egg adhesion and fusion. Interacts with the IZUMO1-IZUMO1R/JUNO sperm-egg complex and replaces IZUMO1R/JUNO as IZUMO1 receptor during fertilization, thereby permitting species-specific gamete fusion. This is Fc receptor-like protein 3 from Homo sapiens (Human).